A 225-amino-acid chain; its full sequence is Protein-L-isoaspartate O-methyltransferase (225 aa).

Ser63 is an active-site residue.

This sequence belongs to the methyltransferase superfamily. L-isoaspartyl/D-aspartyl protein methyltransferase family.

It localises to the cytoplasm. It catalyses the reaction [protein]-L-isoaspartate + S-adenosyl-L-methionine = [protein]-L-isoaspartate alpha-methyl ester + S-adenosyl-L-homocysteine. In terms of biological role, catalyzes the methyl esterification of L-isoaspartyl residues in peptides and proteins that result from spontaneous decomposition of normal L-aspartyl and L-asparaginyl residues. It plays a role in the repair and/or degradation of damaged proteins. The protein is Protein-L-isoaspartate O-methyltransferase of Staphylothermus marinus (strain ATCC 43588 / DSM 3639 / JCM 9404 / F1).